Here is a 592-residue protein sequence, read N- to C-terminus: Arginine--tRNA ligase (592 aa).

The short motif at 134–144 (ANPTGPLHVGH) is the 'HIGH' region element.

This sequence belongs to the class-I aminoacyl-tRNA synthetase family. Monomer.

The protein localises to the cytoplasm. It carries out the reaction tRNA(Arg) + L-arginine + ATP = L-arginyl-tRNA(Arg) + AMP + diphosphate. The protein is Arginine--tRNA ligase of Coxiella burnetii (strain RSA 493 / Nine Mile phase I).